We begin with the raw amino-acid sequence, 217 residues long: Thiamine-phosphate synthase (217 aa).

Residues 39 to 43 (QYRDK) and Asn-71 each bind 4-amino-2-methyl-5-(diphosphooxymethyl)pyrimidine. Mg(2+) contacts are provided by Asp-72 and Asp-91. Thr-110 contacts 4-amino-2-methyl-5-(diphosphooxymethyl)pyrimidine. 2-[(2R,5Z)-2-carboxy-4-methylthiazol-5(2H)-ylidene]ethyl phosphate is bound at residue 137–139 (SHT). 4-amino-2-methyl-5-(diphosphooxymethyl)pyrimidine is bound at residue Lys-140. Gly-167 provides a ligand contact to 2-[(2R,5Z)-2-carboxy-4-methylthiazol-5(2H)-ylidene]ethyl phosphate.

It belongs to the thiamine-phosphate synthase family. Mg(2+) is required as a cofactor.

It catalyses the reaction 2-[(2R,5Z)-2-carboxy-4-methylthiazol-5(2H)-ylidene]ethyl phosphate + 4-amino-2-methyl-5-(diphosphooxymethyl)pyrimidine + 2 H(+) = thiamine phosphate + CO2 + diphosphate. It carries out the reaction 2-(2-carboxy-4-methylthiazol-5-yl)ethyl phosphate + 4-amino-2-methyl-5-(diphosphooxymethyl)pyrimidine + 2 H(+) = thiamine phosphate + CO2 + diphosphate. The enzyme catalyses 4-methyl-5-(2-phosphooxyethyl)-thiazole + 4-amino-2-methyl-5-(diphosphooxymethyl)pyrimidine + H(+) = thiamine phosphate + diphosphate. It functions in the pathway cofactor biosynthesis; thiamine diphosphate biosynthesis; thiamine phosphate from 4-amino-2-methyl-5-diphosphomethylpyrimidine and 4-methyl-5-(2-phosphoethyl)-thiazole: step 1/1. Its function is as follows. Condenses 4-methyl-5-(beta-hydroxyethyl)thiazole monophosphate (THZ-P) and 2-methyl-4-amino-5-hydroxymethyl pyrimidine pyrophosphate (HMP-PP) to form thiamine monophosphate (TMP). In Alcanivorax borkumensis (strain ATCC 700651 / DSM 11573 / NCIMB 13689 / SK2), this protein is Thiamine-phosphate synthase.